A 72-amino-acid polypeptide reads, in one-letter code: Large ribosomal subunit protein uL29 (72 aa).

This sequence belongs to the universal ribosomal protein uL29 family.

This Chlamydia muridarum (strain MoPn / Nigg) protein is Large ribosomal subunit protein uL29 (rpmC).